The chain runs to 252 residues: Chitooligosaccharide deacetylase (252 aa).

The Mg(2+) site is built by His-61 and His-125.

The protein belongs to the YdjC deacetylase family. ChbG subfamily. Homodimer. The cofactor is Mg(2+).

The protein localises to the cytoplasm. It catalyses the reaction N,N'-diacetylchitobiose + H2O = N-acetyl-beta-D-glucosaminyl-(1-&gt;4)-D-glucosamine + acetate. The catalysed reaction is diacetylchitobiose-6'-phosphate + H2O = N'-monoacetylchitobiose-6'-phosphate + acetate. Its pathway is glycan degradation; chitin degradation. Its function is as follows. Involved in the degradation of chitin. ChbG is essential for growth on the acetylated chitooligosaccharides chitobiose and chitotriose but is dispensable for growth on cellobiose and chitosan dimer, the deacetylated form of chitobiose. Deacetylation of chitobiose-6-P and chitotriose-6-P is necessary for both the activation of the chb promoter by the regulatory protein ChbR and the hydrolysis of phosphorylated beta-glucosides by the phospho-beta-glucosidase ChbF. Catalyzes the removal of only one acetyl group from chitobiose-6-P to yield monoacetylchitobiose-6-P, the inducer of ChbR and the substrate of ChbF. The protein is Chitooligosaccharide deacetylase of Klebsiella pneumoniae (strain 342).